Consider the following 379-residue polypeptide: UDP-4-amino-4-deoxy-L-arabinose--oxoglutarate aminotransferase (379 aa).

N6-(pyridoxal phosphate)lysine is present on Lys-182.

This sequence belongs to the DegT/DnrJ/EryC1 family. ArnB subfamily. Homodimer. Pyridoxal 5'-phosphate serves as cofactor.

It catalyses the reaction UDP-4-amino-4-deoxy-beta-L-arabinose + 2-oxoglutarate = UDP-beta-L-threo-pentopyranos-4-ulose + L-glutamate. It functions in the pathway nucleotide-sugar biosynthesis; UDP-4-deoxy-4-formamido-beta-L-arabinose biosynthesis; UDP-4-deoxy-4-formamido-beta-L-arabinose from UDP-alpha-D-glucuronate: step 2/3. The protein operates within bacterial outer membrane biogenesis; lipopolysaccharide biosynthesis. Catalyzes the conversion of UDP-4-keto-arabinose (UDP-Ara4O) to UDP-4-amino-4-deoxy-L-arabinose (UDP-L-Ara4N). The modified arabinose is attached to lipid A and is required for resistance to polymyxin and cationic antimicrobial peptides. The protein is UDP-4-amino-4-deoxy-L-arabinose--oxoglutarate aminotransferase of Salmonella heidelberg (strain SL476).